The following is a 170-amino-acid chain: Adenine phosphoribosyltransferase (170 aa).

Belongs to the purine/pyrimidine phosphoribosyltransferase family. Homodimer.

It localises to the cytoplasm. It catalyses the reaction AMP + diphosphate = 5-phospho-alpha-D-ribose 1-diphosphate + adenine. It functions in the pathway purine metabolism; AMP biosynthesis via salvage pathway; AMP from adenine: step 1/1. Catalyzes a salvage reaction resulting in the formation of AMP, that is energically less costly than de novo synthesis. The protein is Adenine phosphoribosyltransferase of Flavobacterium johnsoniae (strain ATCC 17061 / DSM 2064 / JCM 8514 / BCRC 14874 / CCUG 350202 / NBRC 14942 / NCIMB 11054 / UW101) (Cytophaga johnsonae).